The sequence spans 518 residues: ATP synthase subunit alpha (518 aa).

169-176 (GDRKTGKT) provides a ligand contact to ATP.

This sequence belongs to the ATPase alpha/beta chains family. In terms of assembly, F-type ATPases have 2 components, CF(1) - the catalytic core - and CF(0) - the membrane proton channel. CF(1) has five subunits: alpha(3), beta(3), gamma(1), delta(1), epsilon(1). CF(0) has three main subunits: a(1), b(2) and c(9-12). The alpha and beta chains form an alternating ring which encloses part of the gamma chain. CF(1) is attached to CF(0) by a central stalk formed by the gamma and epsilon chains, while a peripheral stalk is formed by the delta and b chains.

It localises to the cell membrane. The enzyme catalyses ATP + H2O + 4 H(+)(in) = ADP + phosphate + 5 H(+)(out). In terms of biological role, produces ATP from ADP in the presence of a proton gradient across the membrane. The alpha chain is a regulatory subunit. The polypeptide is ATP synthase subunit alpha (Enterococcus faecalis (strain ATCC 700802 / V583)).